The chain runs to 420 residues: Isocitrate dehydrogenase [NADP] (420 aa).

Residues threonine 75–threonine 77 and arginine 82 contribute to the NADP(+) site. Position 77 (threonine 77) interacts with substrate. Substrate contacts are provided by residues serine 94–arginine 100, arginine 109, and arginine 132. Residue aspartate 252 coordinates Mn(2+). Lysine 260 is an NADP(+) binding site. Aspartate 275 contacts Mn(2+). Residues glycine 310–histidine 315 and asparagine 328 contribute to the NADP(+) site.

The protein belongs to the isocitrate and isopropylmalate dehydrogenases family. The cofactor is Mg(2+). Requires Mn(2+) as cofactor.

It catalyses the reaction D-threo-isocitrate + NADP(+) = 2-oxoglutarate + CO2 + NADPH. Its function is as follows. May function in the production of NADPH for fatty acid and sterol synthesis. In Saccharomyces cerevisiae (strain ATCC 204508 / S288c) (Baker's yeast), this protein is Isocitrate dehydrogenase [NADP] (IDP3).